A 959-amino-acid chain; its full sequence is Ribonucleoside-diphosphate reductase large subunit (959 aa).

Residues threonine 68, 83-84, and glycine 112 contribute to the substrate site; that span reads SC. Cysteine 84 and cysteine 626 are joined by a disulfide. The active-site Proton acceptor is the asparagine 270. Positions 378–508 constitute a DOD-type homing endonuclease domain; it reads LPTLFGNSEH…IQLLLIGMGV (131 aa). The active-site Cysteine radical intermediate is the cysteine 611. Glutamate 613 serves as the catalytic Proton acceptor. 751–755 lines the substrate pocket; that stretch reads PTATS.

It belongs to the ribonucleoside diphosphate reductase large chain family. In terms of assembly, heterotetramer composed of a homodimer of the large subunit (R1) and a homodimer of the small subunit (R2). Larger multisubunit protein complex are also active, composed of (R1)n(R2)n.

It catalyses the reaction a 2'-deoxyribonucleoside 5'-diphosphate + [thioredoxin]-disulfide + H2O = a ribonucleoside 5'-diphosphate + [thioredoxin]-dithiol. Its activity is regulated as follows. Under complex allosteric control mediated by deoxynucleoside triphosphates and ATP binding. The type of nucleotide bound at the specificity site determines substrate preference. It seems probable that ATP makes the enzyme reduce CDP and UDP, dGTP favors ADP reduction and dTTP favors GDP reduction. Ribonucleoside-diphosphate reductase holoenzyme provides the precursors necessary for viral DNA synthesis. Allows virus growth in non-dividing cells. Catalyzes the biosynthesis of deoxyribonucleotides from the corresponding ribonucleotides. The polypeptide is Ribonucleoside-diphosphate reductase large subunit (Acheta domesticus (House cricket)).